Reading from the N-terminus, the 313-residue chain is Ribosomal RNA small subunit methyltransferase H (313 aa).

S-adenosyl-L-methionine is bound by residues 35–37 (GGH), Asp55, Phe79, Asp100, and Gln107.

This sequence belongs to the methyltransferase superfamily. RsmH family.

The protein localises to the cytoplasm. The enzyme catalyses cytidine(1402) in 16S rRNA + S-adenosyl-L-methionine = N(4)-methylcytidine(1402) in 16S rRNA + S-adenosyl-L-homocysteine + H(+). Its function is as follows. Specifically methylates the N4 position of cytidine in position 1402 (C1402) of 16S rRNA. This chain is Ribosomal RNA small subunit methyltransferase H, found in Burkholderia pseudomallei (strain 1106a).